The primary structure comprises 426 residues: 3-phosphoshikimate 1-carboxyvinyltransferase (426 aa).

The 3-phosphoshikimate site is built by lysine 23, serine 24, and arginine 28. Lysine 23 is a binding site for phosphoenolpyruvate. Phosphoenolpyruvate contacts are provided by glycine 96 and arginine 124. Positions 170, 171, 172, 198, 314, and 341 each coordinate 3-phosphoshikimate. Glutamine 172 provides a ligand contact to phosphoenolpyruvate. The active-site Proton acceptor is aspartate 314. Phosphoenolpyruvate contacts are provided by arginine 345, arginine 386, and lysine 411.

The protein belongs to the EPSP synthase family. Monomer.

It localises to the cytoplasm. It carries out the reaction 3-phosphoshikimate + phosphoenolpyruvate = 5-O-(1-carboxyvinyl)-3-phosphoshikimate + phosphate. The protein operates within metabolic intermediate biosynthesis; chorismate biosynthesis; chorismate from D-erythrose 4-phosphate and phosphoenolpyruvate: step 6/7. In terms of biological role, catalyzes the transfer of the enolpyruvyl moiety of phosphoenolpyruvate (PEP) to the 5-hydroxyl of shikimate-3-phosphate (S3P) to produce enolpyruvyl shikimate-3-phosphate and inorganic phosphate. The polypeptide is 3-phosphoshikimate 1-carboxyvinyltransferase (Nostoc punctiforme (strain ATCC 29133 / PCC 73102)).